A 399-amino-acid chain; its full sequence is Nicotinate phosphoribosyltransferase (399 aa).

Histidine 217 carries the phosphohistidine; by autocatalysis modification.

The protein belongs to the NAPRTase family. Post-translationally, transiently phosphorylated on a His residue during the reaction cycle. Phosphorylation strongly increases the affinity for substrates and increases the rate of nicotinate D-ribonucleotide production. Dephosphorylation regenerates the low-affinity form of the enzyme, leading to product release.

The catalysed reaction is nicotinate + 5-phospho-alpha-D-ribose 1-diphosphate + ATP + H2O = nicotinate beta-D-ribonucleotide + ADP + phosphate + diphosphate. The protein operates within cofactor biosynthesis; NAD(+) biosynthesis; nicotinate D-ribonucleotide from nicotinate: step 1/1. Catalyzes the synthesis of beta-nicotinate D-ribonucleotide from nicotinate and 5-phospho-D-ribose 1-phosphate at the expense of ATP. This Burkholderia mallei (strain ATCC 23344) protein is Nicotinate phosphoribosyltransferase.